Here is a 248-residue protein sequence, read N- to C-terminus: Pyridoxine 5'-phosphate synthase (248 aa).

3-amino-2-oxopropyl phosphate contacts are provided by asparagine 8 and arginine 19. Histidine 44 acts as the Proton acceptor in catalysis. 2 residues coordinate 1-deoxy-D-xylulose 5-phosphate: arginine 46 and histidine 51. Glutamate 76 (proton acceptor) is an active-site residue. Threonine 106 lines the 1-deoxy-D-xylulose 5-phosphate pocket. Histidine 200 (proton donor) is an active-site residue. Residues aspartate 201 and 223-224 (GH) each bind 3-amino-2-oxopropyl phosphate.

It belongs to the PNP synthase family. In terms of assembly, homooctamer; tetramer of dimers.

The protein resides in the cytoplasm. The catalysed reaction is 3-amino-2-oxopropyl phosphate + 1-deoxy-D-xylulose 5-phosphate = pyridoxine 5'-phosphate + phosphate + 2 H2O + H(+). It functions in the pathway cofactor biosynthesis; pyridoxine 5'-phosphate biosynthesis; pyridoxine 5'-phosphate from D-erythrose 4-phosphate: step 5/5. Its function is as follows. Catalyzes the complicated ring closure reaction between the two acyclic compounds 1-deoxy-D-xylulose-5-phosphate (DXP) and 3-amino-2-oxopropyl phosphate (1-amino-acetone-3-phosphate or AAP) to form pyridoxine 5'-phosphate (PNP) and inorganic phosphate. The sequence is that of Pyridoxine 5'-phosphate synthase from Chelativorans sp. (strain BNC1).